Reading from the N-terminus, the 361-residue chain is Phosphoserine aminotransferase (361 aa).

Arginine 42 lines the L-glutamate pocket. Pyridoxal 5'-phosphate-binding positions include 76 to 77 (AT), tryptophan 102, threonine 152, aspartate 172, and glutamine 195. Position 196 is an N6-(pyridoxal phosphate)lysine (lysine 196). 237-238 (NT) is a pyridoxal 5'-phosphate binding site.

It belongs to the class-V pyridoxal-phosphate-dependent aminotransferase family. SerC subfamily. In terms of assembly, homodimer. Requires pyridoxal 5'-phosphate as cofactor.

Its subcellular location is the cytoplasm. The enzyme catalyses O-phospho-L-serine + 2-oxoglutarate = 3-phosphooxypyruvate + L-glutamate. It carries out the reaction 4-(phosphooxy)-L-threonine + 2-oxoglutarate = (R)-3-hydroxy-2-oxo-4-phosphooxybutanoate + L-glutamate. The protein operates within amino-acid biosynthesis; L-serine biosynthesis; L-serine from 3-phospho-D-glycerate: step 2/3. It functions in the pathway cofactor biosynthesis; pyridoxine 5'-phosphate biosynthesis; pyridoxine 5'-phosphate from D-erythrose 4-phosphate: step 3/5. In terms of biological role, catalyzes the reversible conversion of 3-phosphohydroxypyruvate to phosphoserine and of 3-hydroxy-2-oxo-4-phosphonooxybutanoate to phosphohydroxythreonine. The chain is Phosphoserine aminotransferase from Stenotrophomonas maltophilia (strain R551-3).